Consider the following 454-residue polypeptide: Elongation factor Tu, mitochondrial (454 aa).

A mitochondrion-targeting transit peptide spans 1-51; that stretch reads MASVVLRNPSSKRLVPFSSQIYSRCGASVTSSYSISHSIGGDDLSSSTFGT. Residues 65–261 enclose the tr-type G domain; sequence KPHVNVGTIG…AVDEYIPDPV (197 aa). Residues 74–81 form a G1 region; the sequence is GHVDHGKT. 74-81 is a GTP binding site; sequence GHVDHGKT. Residue threonine 82 is modified to Phosphothreonine. A G2 region spans residues 115-119; that stretch reads GITIA. The tract at residues 136 to 139 is G3; that stretch reads DCPG. Residues 136-140 and 191-194 each bind GTP; these read DCPGH and NKVD. Residues 191 to 194 are G4; sequence NKVD. The tract at residues 229 to 231 is G5; the sequence is SAL.

It belongs to the TRAFAC class translation factor GTPase superfamily. Classic translation factor GTPase family. EF-Tu/EF-1A subfamily.

Its subcellular location is the mitochondrion. In terms of biological role, this protein promotes the GTP-dependent binding of aminoacyl-tRNA to the A-site of ribosomes during protein biosynthesis. In Arabidopsis thaliana (Mouse-ear cress), this protein is Elongation factor Tu, mitochondrial (TUFA).